Here is a 201-residue protein sequence, read N- to C-terminus: Protein GrpE (201 aa).

Polar residues predominate over residues Met-1–Ser-11. A disordered region spans residues Met-1–Asp-40.

Belongs to the GrpE family. In terms of assembly, homodimer.

It localises to the cytoplasm. In terms of biological role, participates actively in the response to hyperosmotic and heat shock by preventing the aggregation of stress-denatured proteins, in association with DnaK and GrpE. It is the nucleotide exchange factor for DnaK and may function as a thermosensor. Unfolded proteins bind initially to DnaJ; upon interaction with the DnaJ-bound protein, DnaK hydrolyzes its bound ATP, resulting in the formation of a stable complex. GrpE releases ADP from DnaK; ATP binding to DnaK triggers the release of the substrate protein, thus completing the reaction cycle. Several rounds of ATP-dependent interactions between DnaJ, DnaK and GrpE are required for fully efficient folding. The protein is Protein GrpE of Beijerinckia indica subsp. indica (strain ATCC 9039 / DSM 1715 / NCIMB 8712).